The following is an 835-amino-acid chain: BCL11 transcription factor A (835 aa).

Over residues 1–12 (MSRRKQGKPQHL) the composition is skewed to basic residues. The segment at 1 to 41 (MSRRKQGKPQHLSKREFSPEPLEAILTDDEPDHGPLGAPEG) is disordered. The interval 1–210 (MSRRKQGKPQ…SEHGSPLTPR (210 aa)) is required for nuclear body formation and for SUMO1 recruitment. The C2HC-type zinc-finger motif lies at 45–71 (LLTCGQCQMNFPLGDILIFIEHKRKQC). The Zn(2+) site is built by cysteine 48, cysteine 51, histidine 66, and cysteine 71. Residue serine 86 is modified to Phosphoserine. Lysine 123 participates in a covalent cross-link: Glycyl lysine isopeptide (Lys-Gly) (interchain with G-Cter in SUMO2). Position 162 is a phosphothreonine (isoleucine 162). Lysine 164 is covalently cross-linked (Glycyl lysine isopeptide (Lys-Gly) (interchain with G-Cter in SUMO2)). The segment at 170-193 (YTCTTCKQPFTSAWFLLQHAQNTH) adopts a C2H2-type 1 zinc-finger fold. Serine 205 is subject to Phosphoserine. Proline 214 bears the Phosphothreonine mark. Position 271 is an asymmetric dimethylarginine (arginine 271). Residues 323–376 (AGNTSSPPLSPGRPSPMQRLLQPFQPGSKPPFLATPPLPPLQSAPPPSQPPVKS) are disordered. Residues serine 332 and serine 337 each carry the phosphoserine modification. Residues 355 to 372 (LATPPLPPLQSAPPPSQP) show a composition bias toward pro residues. C2H2-type zinc fingers lie at residues 377 to 399 (KSCE…RRSH) and 405 to 429 (YKCN…THMH). Basic residues predominate over residues 421 to 430 (KRHMKTHMHK). Disordered stretches follow at residues 421–458 (KRHM…LVGS), 471–512 (KSEN…ERVD), and 572–619 (RSHL…GLSK). The span at 441–450 (GLSTASSPEP) shows a compositional bias: polar residues. Phosphoserine occurs at positions 446 and 447. Acidic residues predominate over residues 482–506 (NGDEEEEEDDEEEEEEEEEEEEELT). The span at 574–584 (HLAEAEGHRDT) shows a compositional bias: basic and acidic residues. Serine 608 carries the phosphoserine modification. Lysine 620 participates in a covalent cross-link: Glycyl lysine isopeptide (Lys-Gly) (interchain with G-Cter in SUMO2). Residues serine 625 and serine 630 each carry the phosphoserine modification. Lysine 634 participates in a covalent cross-link: Glycyl lysine isopeptide (Lys-Gly) (interchain with G-Cter in SUMO1). The span at 682 to 696 (SPFASSSEHSSENGS) shows a compositional bias: low complexity. A Phosphothreonine modification is found at threonine 701. Over residues 706–720 (LDGGISGRSGTGSGG) the composition is skewed to gly residues. The tract at residues 737–835 (EGRRSDTCEY…RVLNNDIKTE (99 aa)) is DNA-binding. A C2H2-type 4 zinc finger spans residues 742–764 (DTCEYCGKVFKNCSNLTVHRRSH). Positions 744, 747, 760, and 764 each coordinate Zn(2+). Residues 764-773 (HTGERPYKCE) show a composition bias toward polar residues. Positions 765–769 (TGERP) are disordered. The segment at 770 to 792 (YKCELCNYACAQSSKLTRHMKTH) adopts a C2H2-type 5 zinc-finger fold. The Zn(2+) site is built by cysteine 772, cysteine 775, histidine 788, and histidine 792. The interval 793–799 (GQVGKDV) is disordered. Residues 800–823 (YKCEICKMPFSVYSTLEKHMKKWH) form a C2H2-type 6 zinc finger. Zn(2+)-binding residues include cysteine 802, cysteine 805, histidine 818, and histidine 823.

In terms of assembly, homotetrameric; self-associates via C2HC-type zinc finger domain. Interacts with MTA2, a component of the nucleosome remodeling and deacetylase (NuRD) repressor complex. Interacts with NR2F1, PIAS3, NR2F2 and NR2F6. Interacts with TBR1. Sumoylated with SUMO1. Isoforms are expressed in a tissue-specific fashion. Isoforms 1, isoform 2, and isoform 3 are expressed at similar levels in testis, kidney and spleen. Isoform 1 is expressed in the stomach, and isoform 2 is expressed exclusively in the lung. Overexpression following proviral integration in hematopoietic cells results in the generation of myeloid leukemia.

The protein localises to the cytoplasm. It localises to the nucleus. Its function is as follows. Transcription factor. Associated with the BAF SWI/SNF chromatin remodeling complex. Binds to the 5'-TGACCA-3' sequence motif in regulatory regions of target genes. Involved in brain development. May play a role in hematopoiesis. Essential factor in lymphopoiesis, required for B-cell formation in fetal liver. May function as a modulator of the transcriptional repression activity of NR2F2. In Mus musculus (Mouse), this protein is BCL11 transcription factor A (Bcl11a).